The primary structure comprises 1729 residues: 1,3-beta-glucan synthase component bgs1 (1729 aa).

S23 carries the phosphoserine modification. 6 helical membrane-spanning segments follow: residues 378 to 398, 416 to 436, 448 to 468, 503 to 523, 546 to 566, and 577 to 597; these read WTAC…AVVF, SMLL…FIFA, LVVG…YSIT, FVSW…SYFF, YILG…LLYL, and YLWY…CLGI. Phosphoserine is present on residues S784 and S788. 8 helical membrane-spanning segments follow: residues 1180–1200, 1237–1257, 1337–1357, 1440–1460, 1484–1504, 1515–1535, 1550–1572, and 1678–1698; these read MVIM…GAMY, ILSI…CELG, MLLF…WITL, YGEI…FLFI, VAPL…GIML, YGVY…VVVF, LLGF…ICFL, and ATLY…PFVF.

The protein belongs to the glycosyltransferase 48 family. Component of the 1,3-beta-glucan synthase (GS) complex, composed of at least the alternate catalytic subunits bgs1, bgs2, bgs3, and bgs4, and a regulatory subunit chr4.

The protein resides in the cell membrane. It is found in the cell septum. It catalyses the reaction [(1-&gt;3)-beta-D-glucosyl](n) + UDP-alpha-D-glucose = [(1-&gt;3)-beta-D-glucosyl](n+1) + UDP + H(+). Functionally, alternate catalytic subunit of the 1,3-beta-glucan synthase (GS) complex. Synthesizes 1,3-beta-glucan, a major structural component of the fungal cell wall. Required for the assembly of the division septum and maintenance of cell polarity. The polypeptide is 1,3-beta-glucan synthase component bgs1 (bgs1) (Schizosaccharomyces pombe (strain 972 / ATCC 24843) (Fission yeast)).